The chain runs to 348 residues: Phosphate acyltransferase (348 aa).

Belongs to the PlsX family. As to quaternary structure, homodimer. Probably interacts with PlsY.

Its subcellular location is the cytoplasm. It carries out the reaction a fatty acyl-[ACP] + phosphate = an acyl phosphate + holo-[ACP]. Its pathway is lipid metabolism; phospholipid metabolism. Functionally, catalyzes the reversible formation of acyl-phosphate (acyl-PO(4)) from acyl-[acyl-carrier-protein] (acyl-ACP). This enzyme utilizes acyl-ACP as fatty acyl donor, but not acyl-CoA. The sequence is that of Phosphate acyltransferase from Francisella tularensis subsp. novicida (strain U112).